A 78-amino-acid chain; its full sequence is Acyl carrier protein (78 aa).

Residues 2–77 (DNIVERVKKI…QAVDYILAGK (76 aa)) enclose the Carrier domain. O-(pantetheine 4'-phosphoryl)serine is present on Ser37.

The protein belongs to the acyl carrier protein (ACP) family. 4'-phosphopantetheine is transferred from CoA to a specific serine of apo-ACP by AcpS. This modification is essential for activity because fatty acids are bound in thioester linkage to the sulfhydryl of the prosthetic group.

It localises to the cytoplasm. Its pathway is lipid metabolism; fatty acid biosynthesis. In terms of biological role, carrier of the growing fatty acid chain in fatty acid biosynthesis. This Dechloromonas aromatica (strain RCB) protein is Acyl carrier protein.